We begin with the raw amino-acid sequence, 920 residues long: 2-oxoglutarate dehydrogenase E1 component (920 aa).

Belongs to the alpha-ketoglutarate dehydrogenase family. In terms of assembly, homodimer. Part of the 2-oxoglutarate dehydrogenase (OGDH) complex composed of E1 (2-oxoglutarate dehydrogenase), E2 (dihydrolipoamide succinyltransferase) and E3 (dihydrolipoamide dehydrogenase); the complex contains multiple copies of the three enzymatic components (E1, E2 and E3). Thiamine diphosphate is required as a cofactor.

The catalysed reaction is N(6)-[(R)-lipoyl]-L-lysyl-[protein] + 2-oxoglutarate + H(+) = N(6)-[(R)-S(8)-succinyldihydrolipoyl]-L-lysyl-[protein] + CO2. Functionally, E1 component of the 2-oxoglutarate dehydrogenase (OGDH) complex which catalyzes the decarboxylation of 2-oxoglutarate, the first step in the conversion of 2-oxoglutarate to succinyl-CoA and CO(2). The polypeptide is 2-oxoglutarate dehydrogenase E1 component (Leptospira interrogans serogroup Icterohaemorrhagiae serovar copenhageni (strain Fiocruz L1-130)).